Consider the following 487-residue polypeptide: MAIAEWRQQLESGEVSARELTDHHLARIKAVDSSVHAFLEVTADRARADADRLDEARAAGEDLPPLAGVPIAIKDNLCTKGIRTTSSSRMLESFVPPYESTVTDRLWRSGAVLIGKTNLDEFAMGGSTETSAFGPTANPWNTGYVPGGSSGGSAAAVAAGECMASLGSDTGGSIRQPASFCGVVGLKPTYGRVSRYGLVAFASSLDQVGPFATSVSDAAELLQAIAGEDPRDSTCLKAPVPNYREVLGRSVSGLRIGVVRECFDQEGIDPQVKASVLAAAELLQSLGAELVDVSCPRFNDGIATYYVIAPSEASANLARYDGVKYGFRAEDASSLASMTARSRTEGFGSEVQRRILIGTYALSAGYVDAYYRKAQQVRTLIRRDFETAFASVDVLLTPTAPSTAFAAGAHADDPLAMYLADLLTIPANLAGLPAINVPCGFDSEGLPIGVQLIGNVLEEPLLLQVAHQYEQSADVMSRRPEGAFIPV.

Catalysis depends on charge relay system residues lysine 74 and serine 149. Residue serine 173 is the Acyl-ester intermediate of the active site.

It belongs to the amidase family. GatA subfamily. In terms of assembly, heterotrimer of A, B and C subunits.

It carries out the reaction L-glutamyl-tRNA(Gln) + L-glutamine + ATP + H2O = L-glutaminyl-tRNA(Gln) + L-glutamate + ADP + phosphate + H(+). Its function is as follows. Allows the formation of correctly charged Gln-tRNA(Gln) through the transamidation of misacylated Glu-tRNA(Gln) in organisms which lack glutaminyl-tRNA synthetase. The reaction takes place in the presence of glutamine and ATP through an activated gamma-phospho-Glu-tRNA(Gln). The polypeptide is Glutamyl-tRNA(Gln) amidotransferase subunit A (Synechococcus sp. (strain CC9311)).